Consider the following 1053-residue polypeptide: MNKIYLILILFTFVGIILANVEKAEVSCTCDENCNDGNKCTLDKCNNGCCSNTPININDNDECTVDTCNPKTGISHTPVNCDDGNSCTADSCLCGKGCQHVPIACDDNNACTVDSCSNSTGCCHTPLSCDDNNPCTVDSCSNSTGCCHTPINVDDHNACTEDKCTQSGGVTHTPIACDDKNACTVDSCSNSTGCCHTPLSCDDNNACTVDSCSNSTGCVHTPINVDDHNACTEDKCTQSGGVTHTPIACDDKNACTADSCSNSTGCCHTPITCDDNNACTVDSCSNSTGCCHTPINVDDNNACTEDKCTQSGGVTHTPIACDDKNACTVDSCSNSTGCVHTPLACDDKNPCTVDSCSNSTGCCHTPINVDDNNACTEDKCTQSGGVTHTPINCDDNNKCTVDSCSNSTGCCHTPMSCDDNNPCTVDSCSNSTGCVHTPINVDDNNACTEDKCTQNGGVTHTPIACDDKNACTVDSCSNSTGCCHTPLKCDDNNACTVDSCSNSTGCVHTPINVDDNNACTEDKCTQSGGVTHTPISCDDKNPCTIDSCSNSTGCVHTPMSCDDRNPCTSDFCSWEKGCQHVALSCNDFNACTMDSCSNSTGCTHTPIACDDKNACTVDSCSNSTGCVHTPLTCDDNNPCTVDSCSNSTGCCHTPINVDDHNACTEDKCTQSGGVTHTPIACDDKNACTVDSCSNSTGCCHTPLSCDDNNACTVDSCSNSTGCVHTPINVDDNNACTEDKCTQNGGVTHTPIACDDKNACTVDSCSNSTGCCHTPLKCDDNNPCTVDSCSNSTGCVHTPMNVDDNNACTEDKCTQNGGVTHTPIRCDDLNSCTADSCSNSTGCVHTPINCDDNNKCTADSCSNSTGCCHTPISCDDNNPCTVDSCSNSTGCCHTPINVDDNNPCTEDKCTQSGGVTHTPIGCNDNNACTVDSCSNSTGCTHTPMKCDDNNPCTIDSCSNSTGCVHTPMNCDDGNFCTLDSCCSTGCTHTPIIIDDNNPCTVDSCCNSTGVVHTPVDCNDNNVLTCDYCSIKQGGKCIHVPMTQCKTFGKCGDDL.

A signal peptide spans methionine 1–leucine 18. An X-1 repeat occupies asparagine 38 to asparagine 60. The tract at residues asparagine 38–asparagine 1019 is 41 X 24 AA tandem repeats, Cys-rich. Residues aspartate 61–glycine 84 form an X-2 repeat. The stretch at asparagine 85 to asparagine 108 is one X-3 repeat. The A-1 repeat unit spans residues asparagine 109–asparagine 132. Residues asparagine 133–histidine 156 form an A-2 repeat. The stretch at asparagine 157–lysine 180 is one B-1 repeat. One copy of the A-3 repeat lies at asparagine 181 to asparagine 204. The stretch at asparagine 205 to histidine 228 is one A-4 repeat. The stretch at asparagine 229–lysine 252 is one B-2 repeat. An A-5 repeat occupies asparagine 253–asparagine 276. An A-6 repeat occupies asparagine 277 to asparagine 300. A B-3 repeat occupies asparagine 301–lysine 324. One copy of the A-7 repeat lies at asparagine 325–lysine 348. Residues asparagine 349–asparagine 372 form an A-8 repeat. One copy of the B-4 repeat lies at asparagine 373 to asparagine 396. The A-9 repeat unit spans residues asparagine 397 to asparagine 420. The stretch at asparagine 421–asparagine 444 is one A-10 repeat. The B-5 repeat unit spans residues asparagine 445–lysine 468. One copy of the A-11 repeat lies at asparagine 469–asparagine 492. Residues asparagine 493 to asparagine 516 form an A-12 repeat. The stretch at asparagine 517 to lysine 540 is one B-6 repeat. Residues asparagine 541 to arginine 564 form an A-13 repeat. The stretch at asparagine 565 to phenylalanine 588 is one X-4 repeat. One copy of the A-14 repeat lies at asparagine 589–lysine 612. The stretch at asparagine 613 to asparagine 636 is one A-15 repeat. Residues asparagine 637 to histidine 660 form an A-16 repeat. One copy of the B-7 repeat lies at asparagine 661–lysine 684. The A-17 repeat unit spans residues asparagine 685–asparagine 708. The A-18 repeat unit spans residues asparagine 709–asparagine 732. A B-8 repeat occupies asparagine 733–lysine 756. One copy of the A-19 repeat lies at asparagine 757–asparagine 780. The stretch at asparagine 781–asparagine 804 is one A-20 repeat. The B-9 repeat unit spans residues asparagine 805–leucine 828. The stretch at asparagine 829–asparagine 852 is one A-21 repeat. An A-22 repeat occupies asparagine 853–asparagine 876. The stretch at asparagine 877–asparagine 900 is one A-23 repeat. The stretch at asparagine 901–asparagine 924 is one B-10 repeat. The stretch at asparagine 925–asparagine 948 is one A-24 repeat. The A-25 repeat unit spans residues asparagine 949–aspartate 971. Residues glycine 972–asparagine 995 form an A-26 repeat. An A-27 repeat occupies asparagine 996–asparagine 1019.

The protein resides in the secreted. Its subcellular location is the extracellular space. It is found in the extracellular matrix. Its function is as follows. Component of the stalk tube, the matrix that encases stalk cells. This Dictyostelium discoideum (Social amoeba) protein is Prestalk protein (ecmB).